A 295-amino-acid chain; its full sequence is Cyclin-G1 (295 aa).

The protein belongs to the cyclin family. Cyclin G subfamily.

Its subcellular location is the nucleus. May play a role in growth regulation. Is associated with G2/M phase arrest in response to DNA damage. May be an intermediate by which p53 mediates its role as an inhibitor of cellular proliferation. This is Cyclin-G1 (CCNG1) from Sus scrofa (Pig).